A 162-amino-acid polypeptide reads, in one-letter code: NADH-quinone oxidoreductase subunit I (162 aa).

4Fe-4S ferredoxin-type domains follow at residues 52 to 82 (LRRY…IEAG) and 93 to 122 (TRYD…EGPN). [4Fe-4S] cluster is bound by residues Cys62, Cys65, Cys68, Cys72, Cys102, Cys105, Cys108, and Cys112.

This sequence belongs to the complex I 23 kDa subunit family. In terms of assembly, NDH-1 is composed of 14 different subunits. Subunits NuoA, H, J, K, L, M, N constitute the membrane sector of the complex. [4Fe-4S] cluster serves as cofactor.

Its subcellular location is the cell inner membrane. The catalysed reaction is a quinone + NADH + 5 H(+)(in) = a quinol + NAD(+) + 4 H(+)(out). Functionally, NDH-1 shuttles electrons from NADH, via FMN and iron-sulfur (Fe-S) centers, to quinones in the respiratory chain. The immediate electron acceptor for the enzyme in this species is believed to be ubiquinone. Couples the redox reaction to proton translocation (for every two electrons transferred, four hydrogen ions are translocated across the cytoplasmic membrane), and thus conserves the redox energy in a proton gradient. In Xanthobacter autotrophicus (strain ATCC BAA-1158 / Py2), this protein is NADH-quinone oxidoreductase subunit I.